Consider the following 954-residue polypeptide: Glycine dehydrogenase (decarboxylating) (954 aa).

At lysine 704 the chain carries N6-(pyridoxal phosphate)lysine.

This sequence belongs to the GcvP family. The glycine cleavage system is composed of four proteins: P, T, L and H. It depends on pyridoxal 5'-phosphate as a cofactor.

The catalysed reaction is N(6)-[(R)-lipoyl]-L-lysyl-[glycine-cleavage complex H protein] + glycine + H(+) = N(6)-[(R)-S(8)-aminomethyldihydrolipoyl]-L-lysyl-[glycine-cleavage complex H protein] + CO2. Functionally, the glycine cleavage system catalyzes the degradation of glycine. The P protein binds the alpha-amino group of glycine through its pyridoxal phosphate cofactor; CO(2) is released and the remaining methylamine moiety is then transferred to the lipoamide cofactor of the H protein. The polypeptide is Glycine dehydrogenase (decarboxylating) (Agrobacterium fabrum (strain C58 / ATCC 33970) (Agrobacterium tumefaciens (strain C58))).